Consider the following 3053-residue polypeptide: MRRSKADVERYIASVQGSAPSPREKSMKGFYFAKLYYEAKEYDLAKKYISTYINVQERDPKAHRFLGLLYEVEENIDKAVECYKRSVELNPTQKDLVLKIAELLCKNDVTDGRAKYWVERAAKLFPGSPAIYKLKEQLLDCKGEDGWNKLFDLIQSELYARPDDIHVNIRLVELYRSNKRLKDAVAHCHEADRNTALRSSLEWNLCVVQTLKEYLESLQCLDSDKSTWRATNKDLLLAYANLMLLTLSTRDVQEGRELLESFDSALQSVKSSVGGNDELSATFLETKGHFYMHVGSLLLKMGQQSDIQWRALSELAALCYLVAFQVPRPKVKLIKGEAGQNLLETMAHDRLSQSGHMLLNLSRGKQDFLKEVVESFANKSGQSALCDALFSSQSSKERSFLGNDDIGNLDGQVPDPDDLARYDTGAVRAHNGSLQHLTWLGLQWNSLSTLPAIRKWLKQLFHHLPQETSRLETNAPESICILDLEVFLLGVIYTSHLQLKEKCNSHHTSYQPLCLPLPVCRQLCTERQKTWWDAVCTLIHRKALPGTSAKLRLLVQREINSLRGQEKHGLQPALLVHWAQSLQKTGSSLNSFYDQREYIGRSVHYWRKVLPLLKMIRKKNSIPEPIDPLFKHFHSVDIQASEIGEYEEDAHITFAILDAVNGNIEDAMTAFESIKNVVSYWNLALIFHRKAEDIENDALSPEEQEECKNYLRKTRDYLIRILDDSDSNTSVVQKLPVPLESVKEMLNSVMQELEDYSEGGTLYKNGCWRSADSELKHSTPSPTKYSLSPSKSYKYSPKTPPRWAEDQNSLLKMICQQVEAIKKEMQELKLNSNNSASPHRWPAEPYGQDPAPDGYQGSQTFHGAPLTVATTGPSVYYSQSPAYNSQYLLRPAANVTPTKGPVYGMNRLPPQQHIYAYSQQMHTPPVQSSSACMFSQEMYGPPLRFESPATGILSPRGDDYFNYNVQQTSTNPPLPEPGYFTKPPLVAHASRSAESKVIEFGKSNFVQPMQGEVIRPPLTTPAHTTQPTPFKFNSNFKSNDGDFTFSSPQVVAQPPSTAYSNSESLLGLLTSDKPLQGDGYSGLKPISGQASGSRNTFSFGSKNTLTENMGPNQQKNFGFHRSDDMFAFHGPGKSVFTTAASELANKSHETDGGSAHGDEEDDGPHFEPVVPLPDKIEVKTGEEDEEEFFCNRAKLFRFDGESKEWKERGIGNVKILRHKTSGKIRLLMRREQVLKICANHYISPDMKLTPNAGSDRSFVWHALDYADELPKPEQLAIRFKTPEEAALFKCKFEEAQNILKALGTNTSTAPNHTLRIVKESATQDNKDICKADGGNLNFEFQIVKKEGPYWNCNSCSFKNAATAKKCVSCQNTNPTSNKELLGPPLVENGFAPKTGLENAQDRFATMTANKEGHWDCSVCLVRNEPTVSRCIACQNTKSASSFVQTSFKFGQGDLPKSVDSDFRSVFSKKEGQWECSVCLVRNERSAKKCVACENPGKQFKEWHCSLCSVKNEAHAIKCVACNNPVTPSLSTAPPSFKFGTSEMSKPFRIGFEGMFAKKEGQWDCSLCFVRNEASATHCIACQYPNKQNQPTSCVSAPASSETSRSPKSGFEGLFPKKEGEWECAVCSVQNESSSLKCVACEASKPTHKPHEAPSAFTVGSKSQSNESAGSQVGTEFKSNFPEKNFKVGISEQKFKFGHVDQEKTPSFAFQGGSNTEFKSIKDGFSFCIPVSADGFKFGIQEKGNQEKKSEKHLENDPSFQAHDTSGQKNGSGVVFGQTSSTFTFADLAKSTSREGFQFGKKDPNFKGFSGAGEKLFSSQSGKVAEKANTSSDLEKDDDAYKTEDSDDIHFEPVVQMPEKVELVTGEEDEKVLYSQRVKLFRFDAEISQWKERGLGNLKILKNEVNGKLRMLMRREQVLKVCANHWITTTMNLKPLSGSDRAWMWLASDFSDGDAKLEQLAAKFKTPELAEEFKQKFEECQRLLLDIPLQTPHKLVDTGRAAKLIQRAEEMKSGLKDFKTFLTNDQVKVTDEENASSGADAPSASDTTAKQNPDNTGPALEWDNYDLREDALDDSVSSSSVHASPLASSPVRKNLFRFGESTTGFNFSFKSALSPSKSPAKLNQSGASVGTDEESDVTQEEERDGQYFEPVVPLPDLVEVSSGEENEQVVFSHRAKLYRYDKDVGQWKERGIGDIKILQNYDNKQVRIVMRRDQVLKLCANHRITPDMTLQTMKGTERVWVWTACDFADGERKIEHLAVRFKLQDVADSFKKIFDEAKTAQEKDSLITPHVSHLSTPRESPCGKIAIAVLEETTRERTDLTQGDEVIDTTSEAGETSSTSETTPKAVVSPPKFVFGSESVKSIFSSEKSKPFAFGNSSATGSLFGFSFNAPLKNSNSEMTSRVQSGSEGKVKPDKCELPQNSDIKQSSDGKVKNLSAFSKENSSTSYTFKTPEKAQEKSKPEDLPSDNDILIVYELTPTPEQKALAEKLLLPSTFFCYKNRPGYVSEEEEDDEDYEMAVKKLNGKLYLDDSEKPLEENLADNDKECVIVWEKKPTVEERAKADTLKLPPTFFCGVCSDTDEDNGNGEDFQSELRKVCEAQKSQNEKVTDRVGIEHIGETEVTNPVGCKSEEPDSDTKHSSSSPVSGTMDKPVDLSTRKETDMEFPSKGENKPVLFGFGSGTGLSFADLASSNSGDFAFGSKDKNFQWANTGAAVFGTQTTSKGGEDEDGSDEDVVHNEDIHFEPIVSLPEVEVKSGEEDEEVLFKERAKLYRWDRDVSQWKERGIGDIKILWHTMKKYYRILMRRDQVFKVCANHVITKAMELKPLNVSNNALVWTASDYADGEAKVEQLAVRFKTKEMTESFKKKFEECQQNIIKLQNGHTSLAAELSKDTNPVVFFDVCADGEPLGRIIMELFSNIVPQTAENFRALCTGEKGFGFKNSIFHRVVPDFICQGGDITKYNGTGGQSIYGDKFDDENFDLKHTGPGLLSMANYGQNTNSSQFFITLKKAEHLDFKHVVFGFVKDGMDTVRKIESFGSPKGSVSRRICITECGQL.

The residue at position 21 (serine 21) is a Phosphoserine. TPR repeat units follow at residues 26–59, 60–93, 94–128, 165–201, 288–319, 583–616, and 648–681; these read SMKGFYFAKLYYEAKEYDLAKKYISTYINVQERD, PKAHRFLGLLYEVEENIDKAVECYKRSVELNPTQ, KDLVLKIAELLCKNDVTDGRAKYWVERAAKLFPGS, IHVNIRLVELYRSNKRLKDAVAHCHEADRNTALRSSL, GHFYMHVGSLLLKMGQQSDIQWRALSELAALC, QKTGSSLNSFYDQREYIGRSVHYWRKVLPLLKMI, and EDAHITFAILDAVNGNIEDAMTAFESIKNVVSYW. The interval 773–802 is disordered; it reads SELKHSTPSPTKYSLSPSKSYKYSPKTPPR. The span at 778–797 shows a compositional bias: low complexity; sequence STPSPTKYSLSPSKSYKYSP. Threonine 779 is modified (phosphothreonine). Phosphoserine is present on residues serine 781, serine 788, and serine 837. The residue at position 944 (arginine 944) is an Asymmetric dimethylarginine. Residues serine 947 and serine 954 each carry the phosphoserine modification. Copy 1 of the repeat occupies 1000–1001; the sequence is FG. The tract at residues 1000-3035 is 20 X 2 AA repeats of F-G; the sequence is FGKSNFVQPM…DTVRKIESFG (2036 aa). Arginine 1015 is modified (asymmetric dimethylarginine; alternate). Arginine 1015 is modified (omega-N-methylarginine; alternate). Threonine 1096 is modified (phosphothreonine). Residues 1099 to 1100 form repeat 2; it reads FG. Serine 1101 carries the phosphoserine modification. Repeat 3 spans residues 1117–1118; it reads FG. Threonine 1138 carries the post-translational modification Phosphothreonine. A disordered region spans residues 1147-1171; it reads SHETDGGSAHGDEEDDGPHFEPVVP. 2 positions are modified to phosphoserine: serine 1154 and serine 1243. The RanBD1 1 domain maps to 1165–1301; the sequence is HFEPVVPLPD…FEEAQNILKA (137 aa). Lysine 1344 is covalently cross-linked (Glycyl lysine isopeptide (Lys-Gly) (interchain with G-Cter in SUMO2)). Residues 1345-1375 form a RanBP2-type 1 zinc finger; that stretch reads KEGPYWNCNSCSFKNAATAKKCVSCQNTNPT. Residue threonine 1407 is modified to Phosphothreonine. The segment at 1410 to 1439 adopts a RanBP2-type 2 zinc-finger fold; it reads KEGHWDCSVCLVRNEPTVSRCIACQNTKSA. Residues serine 1438, serine 1441, and serine 1446 each carry the phosphoserine modification. The stretch at 1449-1450 is repeat 4; the sequence is FG. RanBP2-type zinc fingers lie at residues 1469–1498 and 1494–1527; these read KEGQWECSVCLVRNERSAKKCVACENPGKQ and NPGKQFKEWHCSLCSVKNEAHAIKCVACNNPVTP. Serine 1528 carries the post-translational modification Phosphoserine. Repeat unit 5 spans residues 1538-1539; sequence FG. Lysine 1557 participates in a covalent cross-link: Glycyl lysine isopeptide (Lys-Gly) (interchain with G-Cter in SUMO1); alternate. Lysine 1557 is covalently cross-linked (Glycyl lysine isopeptide (Lys-Gly) (interchain with G-Cter in SUMO2); alternate). The RanBP2-type 5 zinc finger occupies 1558–1587; that stretch reads KEGQWDCSLCFVRNEASATHCIACQYPNKQ. Over residues 1587–1606 the composition is skewed to polar residues; the sequence is QNQPTSCVSAPASSETSRSP. A disordered region spans residues 1587–1609; sequence QNQPTSCVSAPASSETSRSPKSG. Lysine 1607 is covalently cross-linked (Glycyl lysine isopeptide (Lys-Gly) (interchain with G-Cter in SUMO2)). Lysine 1616 is covalently cross-linked (Glycyl lysine isopeptide (Lys-Gly) (interchain with G-Cter in SUMO1); alternate). Lysine 1616 participates in a covalent cross-link: Glycyl lysine isopeptide (Lys-Gly) (interchain with G-Cter in SUMO2); alternate. The RanBP2-type 6 zinc finger occupies 1617–1646; that stretch reads KEGEWECAVCSVQNESSSLKCVACEASKPT. The disordered stretch occupies residues 1648 to 1675; that stretch reads KPHEAPSAFTVGSKSQSNESAGSQVGTE. Polar residues predominate over residues 1657–1675; the sequence is TVGSKSQSNESAGSQVGTE. Serine 1670 is modified (phosphoserine). Copy 6 of the repeat occupies 1696–1697; sequence FG. Serine 1706 carries the post-translational modification Phosphoserine. Repeat unit 7 spans residues 1737-1738; that stretch reads FG. A compositionally biased stretch (basic and acidic residues) spans 1744–1755; that stretch reads NQEKKSEKHLEN. The segment at 1744 to 1772 is disordered; that stretch reads NQEKKSEKHLENDPSFQAHDTSGQKNGSG. Over residues 1757–1772 the composition is skewed to polar residues; it reads PSFQAHDTSGQKNGSG. 2 consecutive repeat copies span residues 1775–1776 and 1798–1799. N6-acetyllysine is present on lysine 1814. Residues 1819-1831 show a composition bias toward polar residues; the sequence is QSGKVAEKANTSS. Positions 1819 to 1846 are disordered; that stretch reads QSGKVAEKANTSSDLEKDDDAYKTEDSD. Threonine 1842 bears the Phosphothreonine mark. Residue serine 1845 is modified to Phosphoserine. The 137-residue stretch at 1849-1985 folds into the RanBD1 2 domain; that stretch reads HFEPVVQMPE…FEECQRLLLD (137 aa). Residue lysine 1859 forms a Glycyl lysine isopeptide (Lys-Gly) (interchain with G-Cter in SUMO2) linkage. Residues 1984 to 2124 are interaction with BICD2; it reads LDIPLQTPHK…SKSPAKLNQS (141 aa). A Phosphothreonine modification is found at threonine 1990. Residues 2030 to 2060 form a disordered region; the sequence is DEENASSGADAPSASDTTAKQNPDNTGPALE. Low complexity predominate over residues 2034 to 2048; it reads ASSGADAPSASDTTA. Serine 2083 and serine 2088 each carry phosphoserine. Copy 10 of the repeat occupies 2097–2098; sequence FG. Residues serine 2107, serine 2117, and serine 2127 each carry the phosphoserine modification. The span at 2111–2121 shows a compositional bias: low complexity; that stretch reads ALSPSKSPAKL. The segment at 2111 to 2144 is disordered; the sequence is ALSPSKSPAKLNQSGASVGTDEESDVTQEEERDG. Threonine 2130 is subject to Phosphothreonine. Residues 2130-2142 are compositionally biased toward acidic residues; sequence TDEESDVTQEEER. At serine 2134 the chain carries Phosphoserine. Residues 2146 to 2282 enclose the RanBD1 3 domain; that stretch reads YFEPVVPLPD…FDEAKTAQEK (137 aa). 3 positions are modified to phosphoserine: serine 2299, serine 2330, and serine 2348. The disordered stretch occupies residues 2316–2348; the sequence is RTDLTQGDEVIDTTSEAGETSSTSETTPKAVVS. Positions 2328-2342 are enriched in low complexity; sequence TTSEAGETSSTSETT. Copy 11 of the repeat occupies 2354-2355; sequence FG. Residue lysine 2360 forms a Glycyl lysine isopeptide (Lys-Gly) (interchain with G-Cter in SUMO2) linkage. Serine 2364 is modified (phosphoserine). A run of 2 repeats spans residues 2373–2374 and 2383–2384. Over residues 2394-2406 the composition is skewed to polar residues; that stretch reads SNSEMTSRVQSGS. The segment at 2394–2430 is disordered; it reads SNSEMTSRVQSGSEGKVKPDKCELPQNSDIKQSSDGK. A Glycyl lysine isopeptide (Lys-Gly) (interchain with G-Cter in SUMO) cross-link involves residue lysine 2430. A Glycyl lysine isopeptide (Lys-Gly) (interchain with G-Cter in SUMO1); alternate cross-link involves residue lysine 2432. Residue lysine 2432 forms a Glycyl lysine isopeptide (Lys-Gly) (interchain with G-Cter in SUMO2); alternate linkage. A disordered region spans residues 2443-2463; it reads STSYTFKTPEKAQEKSKPEDL. Lysine 2449 is covalently cross-linked (Glycyl lysine isopeptide (Lys-Gly) (interchain with G-Cter in SUMO2)). Position 2450 is a phosphothreonine (threonine 2450). Residues 2450–2462 show a composition bias toward basic and acidic residues; sequence TPEKAQEKSKPED. The interaction with sumoylated RANGAP1 stretch occupies residues 2468–2472; sequence DILIV. 2 consecutive repeat copies span residues 2470-2522 and 2546-2596. Positions 2470–2522 are interaction with UBE2I; the sequence is LIVYELTPTPEQKALAEKLLLPSTFFCYKNRPGYVSEEEEDDEDYEMAVKKLN. Residues 2470–2545 form a required for E3 SUMO-ligase activity region; sequence LIVYELTPTP…ENLADNDKEC (76 aa). Positions 2470–2596 are 2 X 50 AA approximate repeats; the sequence is LIVYELTPTP…DFQSELRKVC (127 aa). Tyrosine 2503 is subject to Phosphotyrosine. Serine 2505 and serine 2576 each carry phosphoserine. Residues 2523-2596 form an interaction with SUMO1 region; it reads GKLYLDDSEK…DFQSELRKVC (74 aa). Threonine 2578 is modified (phosphothreonine). 2 stretches are compositionally biased toward basic and acidic residues: residues 2598–2617 and 2627–2637; these read AQKSQNEKVTDRVGIEHIGE and KSEEPDSDTKH. The disordered stretch occupies residues 2598–2666; the sequence is AQKSQNEKVT…KETDMEFPSK (69 aa). Lysine 2627 participates in a covalent cross-link: Glycyl lysine isopeptide (Lys-Gly) (interchain with G-Cter in SUMO2). Serine 2640 bears the Phosphoserine mark. Residue lysine 2649 forms a Glycyl lysine isopeptide (Lys-Gly) (interchain with G-Cter in SUMO2) linkage. The segment covering 2649–2666 has biased composition (basic and acidic residues); sequence KPVDLSTRKETDMEFPSK. Tandem repeats lie at residues 2674–2675, 2676–2677, 2697–2698, and 2714–2715. Serine 2729 is subject to Phosphoserine. Residues 2740 to 2875 enclose the RanBD1 4 domain; it reads HFEPIVSLPE…FEECQQNIIK (136 aa). Residues 2896–3052 enclose the PPIase cyclophilin-type domain; that stretch reads FFDVCADGEP…RRICITECGQ (157 aa). 3 repeat units span residues 2935-2936, 3018-3019, and 3034-3035. Serine 3036 bears the Phosphoserine mark.

The protein belongs to the RanBP2 E3 ligase family. As to quaternary structure, part of the nuclear pore complex. Forms a complex with NXT1, NXF1 and RANGAP1. Forms a tight complex with RANBP1 and UBE2I. Interacts with SUMO1 but not SUMO2. Interacts with sumoylated RANGAP1. Interacts with CDCA8. Interacts with PML. Interacts with BICD2. Interacts with PRKN. Interacts with MCM3AP. Interacts with COX11. Interacts with synaptic plasticity regulator PANTS. Polyubiquitinated by PRKN, which leads to proteasomal degradation. In terms of processing, the inner channel of the NPC has a different redox environment from the cytoplasm and allows the formation of interchain disulfide bonds between some nucleoporins, the significant increase of these linkages upon oxidative stress reduces the permeability of the NPC.

It localises to the nucleus. The protein localises to the nucleus membrane. It is found in the nuclear pore complex. The protein resides in the nucleus envelope. The protein operates within protein modification; protein sumoylation. E3 SUMO-protein ligase which facilitates SUMO1 and SUMO2 conjugation by UBE2I. Involved in transport factor (Ran-GTP, karyopherin)-mediated protein import via the F-G repeat-containing domain which acts as a docking site for substrates. Binds single-stranded RNA (in vitro). May bind DNA. Component of the nuclear export pathway. Specific docking site for the nuclear export factor exportin-1. Inhibits EIF4E-dependent mRNA export. Sumoylates PML at 'Lys-490' which is essential for the proper assembly of PML-NB. Recruits BICD2 to the nuclear envelope and cytoplasmic stacks of nuclear pore complex known as annulate lamellae during G2 phase of cell cycle. Probable inactive PPIase with no peptidyl-prolyl cis-trans isomerase activity. This is E3 SUMO-protein ligase RanBP2 (Ranbp2) from Mus musculus (Mouse).